Here is a 124-residue protein sequence, read N- to C-terminus: MMSTATETMTDLDSIPPVMTLTQNAADKIASLIEEEGSDDLKLRVFVTGGGCSGFQYGFTFDENMNEGDTEVHQLGVSLLIDPMSYQYLVGAEIDYSEGLEGAQFVIKNPNATTTCGCGSSFSA.

Iron-sulfur cluster contacts are provided by C52, C116, and C118.

It belongs to the HesB/IscA family. In terms of assembly, homodimer. Iron-sulfur cluster serves as cofactor.

Required for insertion of 4Fe-4S clusters for at least IspG. The polypeptide is Iron-sulfur cluster insertion protein ErpA (Acidithiobacillus ferrooxidans (strain ATCC 23270 / DSM 14882 / CIP 104768 / NCIMB 8455) (Ferrobacillus ferrooxidans (strain ATCC 23270))).